Consider the following 34-residue polypeptide: Conotoxin Cl6d (34 aa).

Cystine bridges form between Cys-4/Cys-19, Cys-12/Cys-29, and Cys-18/Cys-33. Residues Pro-14 and Pro-21 each carry the 4-hydroxyproline modification.

Expressed by the venom duct.

It localises to the secreted. The polypeptide is Conotoxin Cl6d (Californiconus californicus (California cone)).